The chain runs to 260 residues: 14-3-3 protein 3 (260 aa).

Belongs to the 14-3-3 family. Homodimer.

This Solanum lycopersicum (Tomato) protein is 14-3-3 protein 3 (TFT3).